Reading from the N-terminus, the 250-residue chain is Cytochrome c oxidase subunit 2 (250 aa).

The Mitochondrial intermembrane portion of the chain corresponds to 1-27 (MGLLFNNLIMNFDAPSPWGIYFQDSAT). A helical transmembrane segment spans residues 28–61 (PQMEGLVELHDNIMYYLVVILFGVGWILLSIIRN). Topologically, residues 62-77 (YISTKSPISHKYLNHG) are mitochondrial matrix. Residues 78 to 107 (TLIELIWTITPAVILILIAFPSFKLLYLMD) form a helical membrane-spanning segment. At 108 to 250 (EVSDPSMSVL…EKFLTWLEEQ (143 aa)) the chain is on the mitochondrial intermembrane side. Cu cation-binding residues include histidine 185, cysteine 220, glutamate 222, cysteine 224, histidine 228, and methionine 231. Glutamate 222 is a Mg(2+) binding site.

Belongs to the cytochrome c oxidase subunit 2 family. As to quaternary structure, component of the cytochrome c oxidase (complex IV, CIV), a multisubunit enzyme composed of 11 subunits. The complex is composed of a catalytic core of 3 subunits Cox1, Cox2 and Cox3, encoded in the mitochondrial DNA, and 8 supernumerary subunits Cox4, Cox5a/Cox5, Cox6, Cox7, Cox8, Cox7a/Cox9, Cox6b/Cox12 and Cox6a/Cox13, which are encoded in the nuclear genome. The complex exists as a monomer or a dimer and forms respiratory supercomplexes (SCs) in the inner mitochondrial membrane with NADH-ubiquinone oxidoreductase (complex I, CI) and ubiquinol-cytochrome c oxidoreductase (cytochrome b-c1 complex, complex III, CIII), resulting in various different assemblies (supercomplexes I(1)IV(1), I(1)III(3)IV(2), III(2)IV(1) and III(2)IV(2) as well as larger supercomplexes of compositions like I(1)III(2)IV(5-6)). Requires Cu cation as cofactor.

It localises to the mitochondrion inner membrane. It catalyses the reaction 4 Fe(II)-[cytochrome c] + O2 + 8 H(+)(in) = 4 Fe(III)-[cytochrome c] + 2 H2O + 4 H(+)(out). Functionally, component of the cytochrome c oxidase, the last enzyme in the mitochondrial electron transport chain which drives oxidative phosphorylation. The respiratory chain contains 3 multisubunit complexes succinate dehydrogenase (complex II, CII), ubiquinol-cytochrome c oxidoreductase (cytochrome b-c1 complex, complex III, CIII) and cytochrome c oxidase (complex IV, CIV), that cooperate to transfer electrons derived from NADH and succinate to molecular oxygen, creating an electrochemical gradient over the inner membrane that drives transmembrane transport and the ATP synthase. Cytochrome c oxidase is the component of the respiratory chain that catalyzes the reduction of oxygen to water. Electrons originating from reduced cytochrome c in the intermembrane space (IMS) are transferred via the dinuclear copper A center (CU(A)) of Cox2 and heme A of Cox1 to the active site in Cox1, a binuclear center (BNC) formed by heme A3 and copper B (CU(B)). The BNC reduces molecular oxygen to 2 water molecules using 4 electrons from cytochrome c in the IMS and 4 protons from the mitochondrial matrix. The sequence is that of Cytochrome c oxidase subunit 2 (cox-2) from Neurospora crassa (strain ATCC 24698 / 74-OR23-1A / CBS 708.71 / DSM 1257 / FGSC 987).